The following is a 445-amino-acid chain: Type II methyltransferase M.Bpa9945I (445 aa).

The SAM-dependent MTase C5-type domain maps to 1–444 (MIVIDLFSGA…RAVKDVINGH (444 aa)). Cys136 is an active-site residue.

This sequence belongs to the class I-like SAM-binding methyltransferase superfamily. C5-methyltransferase family.

Its subcellular location is the cytoplasm. The catalysed reaction is a 2'-deoxycytidine in DNA + S-adenosyl-L-methionine = a 5-methyl-2'-deoxycytidine in DNA + S-adenosyl-L-homocysteine + H(+). Its function is as follows. Component of antiviral defense system DISARM (defense island system associated with restriction-modification), composed of DrmE, DrmA, DrmB, DrmC and DrmMII. DISARM is probably a multi-gene restriction module, this subunit is a DNA methylase. Expression of DISARM in B.subtilis (strain BEST7003) confers resistance to phages Nf, phi29, phi105, phi3T, SPO1, SPR and SPP1. Protection is over 10(7)-fold against phi3T, 10(4)-10(5)-fold against Nf, phi29, phi105 and SPR, 100-fold against SPO1 and 10-fold against SPP1. DISARM does not interfere with phage adsorption, but instead interferes with (phi3T) DNA replication early in its cycle, preventing replication, circularization and lysogeny and probably causes phage DNA degradation (DNA is degraded in SPP1-infected cells). Expression of this methylase alone leads to highly methylated phage, however they are still susceptible to the DISARM system. Functionally, a methylase, recognizes the double-stranded sequence 5'-CCWGG-3', methylates C-2 on both strands. Phage Nf does not have any 5'-CCWGG-3' motifs but is still targeted by the DISARM system. This Bacillus paralicheniformis (strain ATCC 9945a / NCIMB 11709 / CD-2) protein is Type II methyltransferase M.Bpa9945I.